The chain runs to 477 residues: Inositol phosphosphingolipids phospholipase C (477 aa).

Residues 1-398 (MYNRKDRDVH…QRQKFFRGLH (398 aa)) lie on the Cytoplasmic side of the membrane. Residue glutamate 100 coordinates Mg(2+). Catalysis depends on histidine 334, which acts as the Proton acceptor. The chain crosses the membrane as a helical span at residues 399-417 (FWASILLLIASLVVTTFTA). Residues 418-424 (NKAGWSS) lie on the Mitochondrial intermembrane side of the membrane. The helical transmembrane segment at 425-449 (IFWVLFAIAVSISGTIDGAISFLFG) threads the bilayer. Topologically, residues 450-477 (RSEIRALIEVEQEVLDAEHHLQTFLSEK) are cytoplasmic.

It belongs to the neutral sphingomyelinase family. Mg(2+) is required as a cofactor.

Its subcellular location is the endoplasmic reticulum membrane. It localises to the mitochondrion outer membrane. It carries out the reaction an N-acyl-(4R)-4-hydroxysphinganine-1-phosphoinositol + H2O = 1D-myo-inositol 1-phosphate + an N-acyl-(4R)-4-hydroxysphinganine + H(+). The enzyme catalyses a mannosylinositol-1-phospho-N-acyl-sphingoid base + H2O = mannosylinositol-1-phosphate + an N-acyl-sphingoid base + H(+). It catalyses the reaction an inositol phosphomannosylinositol-1-phospho-N-acyl-(4R)-4-hydroxysphinganine + H2O = mannosyldiinositol-1-phosphate + an N-acyl-(4R)-4-hydroxysphinganine + H(+). Its pathway is lipid metabolism; sphingolipid metabolism. Its activity is regulated as follows. Activated through localization to mitochondria in specific growth phases. Its function is as follows. Responsible for the hydrolysis of the phosphosphingolipids (IPS), inositol phosphorylceramide (IPC), mannosylinositol phosphorylceramide (MIPC), and mannosyldiinositol phosphorylceramide (M(IP)2C). Regulates sphingolipid metabolism in mitochondria, especially the formation of alpha-hydroxylated very long chain phytoceramides. The generated ceramides contribute to the normal function of mitochondria. Also active on sphingomyelin (SM), but this activity is probably not physiologically relevant. The chain is Inositol phosphosphingolipids phospholipase C from Saccharomyces cerevisiae (strain ATCC 204508 / S288c) (Baker's yeast).